Reading from the N-terminus, the 430-residue chain is Mitochondrial distribution and morphology protein 12 (430 aa).

The SMP-LTD domain maps to methionine 1–isoleucine 430. Disordered stretches follow at residues aspartate 61 to asparagine 117, threonine 177 to glutamate 276, and methionine 352 to serine 377. Acidic residues predominate over residues phenylalanine 69–glutamate 82. Residues serine 85–asparagine 96 are compositionally biased toward basic and acidic residues. 2 stretches are compositionally biased toward polar residues: residues serine 211–isoleucine 233 and alanine 241–glutamine 251. The span at proline 265–glutamate 276 shows a compositional bias: basic and acidic residues.

Belongs to the MDM12 family. As to quaternary structure, component of the ER-mitochondria encounter structure (ERMES) or MDM complex, composed of MMM1, MDM10, MDM12 and MDM34. An MMM1 homodimer associates with one molecule of MDM12 on each side in a pairwise head-to-tail manner, and the SMP-LTD domains of MMM1 and MDM12 generate a continuous hydrophobic tunnel for phospholipid trafficking.

The protein localises to the mitochondrion outer membrane. It localises to the endoplasmic reticulum membrane. In terms of biological role, component of the ERMES/MDM complex, which serves as a molecular tether to connect the endoplasmic reticulum (ER) and mitochondria. Components of this complex are involved in the control of mitochondrial shape and protein biogenesis, and function in nonvesicular lipid trafficking between the ER and mitochondria. MDM12 is required for the interaction of the ER-resident membrane protein MMM1 and the outer mitochondrial membrane-resident beta-barrel protein MDM10. The MDM12-MMM1 subcomplex functions in the major beta-barrel assembly pathway that is responsible for biogenesis of all mitochondrial outer membrane beta-barrel proteins, and acts in a late step after the SAM complex. The MDM10-MDM12-MMM1 subcomplex further acts in the TOM40-specific pathway after the action of the MDM12-MMM1 complex. Essential for establishing and maintaining the structure of mitochondria and maintenance of mtDNA nucleoids. This chain is Mitochondrial distribution and morphology protein 12, found in Ajellomyces capsulatus (strain G186AR / H82 / ATCC MYA-2454 / RMSCC 2432) (Darling's disease fungus).